We begin with the raw amino-acid sequence, 108 residues long: Protein YcgL (108 aa).

In terms of domain architecture, YcgL spans 12–96 (MFCVIYRSSK…PPEDLLKQHL (85 aa)).

The chain is Protein YcgL from Escherichia coli O9:H4 (strain HS).